The primary structure comprises 315 residues: Olfactory receptor 10H2 (315 aa).

Topologically, residues 1–25 (MLGLNHTSMSEFILVGFSAFPHLQL) are extracellular. N-linked (GlcNAc...) asparagine glycosylation occurs at Asn5. Residues 26 to 46 (MLFLLFLLMYLFTLLGNLLIM) form a helical membrane-spanning segment. The Cytoplasmic segment spans residues 47-54 (ATVWSERS). The chain crosses the membrane as a helical span at residues 55-75 (LHTPMYLFLCVLSVSEILYTV). Over 76 to 99 (AIIPRMLADLLSTQRSIAFLACAS) the chain is Extracellular. The cysteines at positions 97 and 189 are disulfide-linked. Residues 100-120 (QMFFSFSFGFTHSFLLTVMGY) form a helical membrane-spanning segment. Topologically, residues 121–139 (DRYVAICHPLRYNVLMSPR) are cytoplasmic. Residues 140-160 (GCACLVGCSWAGGSVMGMVVT) traverse the membrane as a helical segment. The Extracellular portion of the chain corresponds to 161–197 (SAIFQLTFCGSHEIQHFLCHVPPLLKLACGNNVPAVA). A helical membrane pass occupies residues 198–218 (LGVGLVCIMALLGCFLLILLS). Over 219–238 (YAFIVADILKIPSAEGRNKA) the chain is Cytoplasmic. The chain crosses the membrane as a helical span at residues 239-259 (FSTCASHLIVVIVHYGFASVI). Topologically, residues 260–272 (YLKPKGPHSQEGD) are extracellular. Residues 273–293 (TLMATTYAVLTPFLSPIIFSL) traverse the membrane as a helical segment. Residues 294 to 315 (RNKELKVAMKRTFLSTLYSSGT) lie on the Cytoplasmic side of the membrane.

The protein belongs to the G-protein coupled receptor 1 family.

It is found in the cell membrane. Functionally, odorant receptor. The sequence is that of Olfactory receptor 10H2 (OR10H2) from Homo sapiens (Human).